The following is a 78-amino-acid chain: Conotoxin TsMSGL-13 (78 aa).

Positions 1–24 are cleaved as a signal peptide; that stretch reads MSGLGIMVLTLLLFMFMATSHQDA. The propeptide occupies 25–44; the sequence is GEKQATQRDAINVRRRRSIT. Disulfide bonds link Cys51–Cys63, Cys55–Cys72, and Cys62–Cys76. A Phenylalanine amide modification is found at Phe77.

The protein belongs to the conotoxin O3 superfamily. In terms of tissue distribution, expressed by the venom duct.

It localises to the secreted. The sequence is that of Conotoxin TsMSGL-13 from Conus tessulatus (Tessellate cone).